Here is a 418-residue protein sequence, read N- to C-terminus: Probable serine hydroxymethyltransferase (418 aa).

Residues L118 and 122–124 each bind (6S)-5,6,7,8-tetrahydrofolate; that span reads GHL. K226 is subject to N6-(pyridoxal phosphate)lysine. Residue 351–353 coordinates (6S)-5,6,7,8-tetrahydrofolate; the sequence is SPF.

The protein belongs to the SHMT family. In terms of assembly, homodimer. Requires pyridoxal 5'-phosphate as cofactor.

The protein resides in the cytoplasm. The enzyme catalyses (6R)-5,10-methylene-5,6,7,8-tetrahydrofolate + glycine + H2O = (6S)-5,6,7,8-tetrahydrofolate + L-serine. The protein operates within one-carbon metabolism; tetrahydrofolate interconversion. Its function is as follows. Catalyzes the reversible interconversion of serine and glycine with tetrahydrofolate (THF) serving as the one-carbon carrier. This reaction serves as the major source of one-carbon groups required for the biosynthesis of purines, thymidylate, methionine, and other important biomolecules. The polypeptide is Probable serine hydroxymethyltransferase (Mesomycoplasma hyopneumoniae (strain J / ATCC 25934 / NCTC 10110) (Mycoplasma hyopneumoniae)).